Here is a 472-residue protein sequence, read N- to C-terminus: Karilysin (472 aa).

A signal peptide spans 1–20 (MKRFILLFFLSTIAIFKVYS). The propeptide at 21–34 (QRLYDNGPLTGDNN) is activation peptide. Zn(2+) is bound by residues histidine 102, aspartate 104, histidine 117, histidine 133, and histidine 155. Glutamate 156 (proton donor/acceptor) is an active-site residue. Residues histidine 159 and histidine 165 each contribute to the Zn(2+) site. A propeptide spans 196–386 (YGYPFSISGP…AVSCSRTISP (191 aa)) (removed in short form). A propeptide spans 387–472 (FTLSPNPATD…QTYTQKLIKK (86 aa)) (removed in long form).

Belongs to the peptidase M10A family. It depends on Zn(2+) as a cofactor. Post-translationally, processes itself into the mature 18-kDa enzyme (Kly18) through sequential autoproteolytic cleavage at both the N- and C-termini. However, the maturation intermediate Kly38 is found to be more active than Kly18 and the rate for its processing is slow, which raises the question as to whether Kly38 is a physiologically relevant entity.

The protein localises to the secreted. With respect to regulation, autoprocessing and proteolytic activity are completely inhibited by EDTA and 1,10-phenanthroline in vitro. Proteolytic activity is 3-fold enhanced by Ca(2+) due to stabilization of the protein structure but inhibited by an excess of Zn(2+). Inhibitory studies of karilysin identified several phage display-selected peptides with apparent inhibition constants (Ki) in the micromolar range, among which is the tetrapeptide SWFP (Ki=10.7 uM). Its function is as follows. Metalloprotease able to cleave casein, gelatin, elastin, fibrinogen and fibronectin. Shows exclusive preference for hydrophobic residues, especially Leu, Tyr and Met, at the P1' position of substrates, and for Pro or Ala at P3. Can efficiently cleave the antimicrobial peptide LL-37 which is a component of the immune system, leading to a significant reduction of its bactericidal activity. Is also able to inhibit all pathways of the human complement system. The classical and lectin complement pathways are inhibited because of the efficient degradation of mannose-binding lectin, ficolin-2, ficolin-3, and C4 by karilysin, whereas inhibition of the terminal pathway is caused by cleavage of C5. Thus, karilysin appears to be a major virulence factor of T.forsythia that contributes to evasion of the human immune response and periodontal disease. Seems to act synergistically with gingipains from the periodontal pathogen P.gingivalis present at the same sites of infection. This chain is Karilysin (kly), found in Tannerella forsythia (strain ATCC 43037 / JCM 10827 / CCUG 21028 A / KCTC 5666 / FDC 338) (Bacteroides forsythus).